Consider the following 316-residue polypeptide: MKVLLANPRGFCAGVDRAIEIVKRTIDMLGTPIYVRHEVVHNRFVVDDLKQRGAIFVEELHQVPDGATVIFSAHGVSQAVRRQAAQRGLKVFDATCPLVTKVHLDVARHCRTGRDMILIGHAGHPEVEGTMGQWDQERGTGRIYLVENIDDVATLHVAQPHHLAYTTQTTLSVDDTRNIIDALRQRFPTIQGPKNNDICYATQNRQDAVRELARECDLVLVVGSPNSSNSNRLSELAQREGVASYLIDSAAEIDPAWVIDKHHIGVTAGASAPQVLVDGVLARLYELGATSVSEHSGKPESMVFALPKALRLQLVD.

Residue cysteine 12 coordinates [4Fe-4S] cluster. (2E)-4-hydroxy-3-methylbut-2-enyl diphosphate contacts are provided by histidine 41 and histidine 74. Dimethylallyl diphosphate-binding residues include histidine 41 and histidine 74. Histidine 41 and histidine 74 together coordinate isopentenyl diphosphate. Cysteine 96 lines the [4Fe-4S] cluster pocket. (2E)-4-hydroxy-3-methylbut-2-enyl diphosphate is bound at residue histidine 124. Histidine 124 lines the dimethylallyl diphosphate pocket. Histidine 124 serves as a coordination point for isopentenyl diphosphate. The active-site Proton donor is glutamate 126. Threonine 169 contacts (2E)-4-hydroxy-3-methylbut-2-enyl diphosphate. Position 199 (cysteine 199) interacts with [4Fe-4S] cluster. (2E)-4-hydroxy-3-methylbut-2-enyl diphosphate-binding residues include serine 227, serine 228, asparagine 229, and serine 271. Dimethylallyl diphosphate is bound by residues serine 227, serine 228, asparagine 229, and serine 271. Residues serine 227, serine 228, asparagine 229, and serine 271 each coordinate isopentenyl diphosphate.

The protein belongs to the IspH family. Requires [4Fe-4S] cluster as cofactor.

The catalysed reaction is isopentenyl diphosphate + 2 oxidized [2Fe-2S]-[ferredoxin] + H2O = (2E)-4-hydroxy-3-methylbut-2-enyl diphosphate + 2 reduced [2Fe-2S]-[ferredoxin] + 2 H(+). It catalyses the reaction dimethylallyl diphosphate + 2 oxidized [2Fe-2S]-[ferredoxin] + H2O = (2E)-4-hydroxy-3-methylbut-2-enyl diphosphate + 2 reduced [2Fe-2S]-[ferredoxin] + 2 H(+). Its pathway is isoprenoid biosynthesis; dimethylallyl diphosphate biosynthesis; dimethylallyl diphosphate from (2E)-4-hydroxy-3-methylbutenyl diphosphate: step 1/1. It participates in isoprenoid biosynthesis; isopentenyl diphosphate biosynthesis via DXP pathway; isopentenyl diphosphate from 1-deoxy-D-xylulose 5-phosphate: step 6/6. Functionally, catalyzes the conversion of 1-hydroxy-2-methyl-2-(E)-butenyl 4-diphosphate (HMBPP) into a mixture of isopentenyl diphosphate (IPP) and dimethylallyl diphosphate (DMAPP). Acts in the terminal step of the DOXP/MEP pathway for isoprenoid precursor biosynthesis. In Xylella fastidiosa (strain M23), this protein is 4-hydroxy-3-methylbut-2-enyl diphosphate reductase.